Consider the following 1208-residue polypeptide: Neural cell adhesion molecule L1-like protein (1208 aa).

The signal sequence occupies residues 1-24 (MEPLLLGRGLIVYLMFLLLKFSKA). Topologically, residues 25-1082 (IEIPSSVQQV…LYDDISTQGW (1058 aa)) are extracellular. Ig-like C2-type domains are found at residues 35–124 (PTII…EEIE) and 128–223 (PSVP…MKLT). Disulfide bonds link Cys57/Cys109 and Cys153/Cys204. N-linked (GlcNAc...) asparagine glycans are attached at residues Lys231 and Asn299. 4 Ig-like C2-type domains span residues 235–328 (PKLL…VIVE), 331–417 (PRWT…ANID), 423–510 (PLIQ…ANLD), and 515–607 (TKLR…TQVT). Intrachain disulfides connect Cys262–Cys310, Cys352–Cys401, Cys445–Cys494, and Cys536–Cys591. N-linked (GlcNAc...) asparagine glycosylation is found at Asn476 and Asn482. The DGEA motif lies at 555 to 558 (DGEA). Residues Asn562 and Asn580 are each glycosylated (N-linked (GlcNAc...) asparagine). Fibronectin type-III domains follow at residues 614-709 (PPEN…TPPA), 714-807 (NPQN…SGED), 809-914 (PDTA…TPEG), and 918-1015 (QPTF…LGEG). The disordered stretch occupies residues 693 to 716 (GRSQPSQPSDHHETPPAAPDRNPQ). 4 N-linked (GlcNAc...) asparagine glycosylation sites follow: Asn767, Asn822, Asn945, and Asn1026. The helical transmembrane segment at 1083–1103 (FIGLMCAIALLTLLLLTVCFV) threads the bilayer. Topologically, residues 1104–1208 (KRNRGGKYSV…SSTATFPLRA (105 aa)) are cytoplasmic. Residues 1131–1163 (ETFGEYSDSDEKPLKGSLRSLNRDMQPTESADS) form a disordered region. Residues Ser1147, Ser1160, and Ser1180 each carry the phosphoserine modification. Positions 1149-1161 (RSLNRDMQPTESA) are enriched in polar residues. An FIG[AQ]Y motif is present at residues 1181 to 1185 (FIGAY). The disordered stretch occupies residues 1189-1208 (KEKGSVESNGSSTATFPLRA). The span at 1194 to 1208 (VESNGSSTATFPLRA) shows a compositional bias: polar residues.

Belongs to the immunoglobulin superfamily. L1/neurofascin/NgCAM family. In terms of assembly, may interact with L1CAM. May interact with ITGB1/ITGA1 heterodimer and ITGB1/ITGA2 heterodimer as well as with ANK3. In terms of processing, cleavage by metalloprotease ADAM8 in the extracellular part generates 2 soluble forms (125 kDa and 165 kDa) in vitro and is inhibited by metalloprotease inhibitors. Cleaved by BACE1. Post-translationally, N-glycosylated. Contains N-linked oligosaccharides with a sulfated carbohydrate structure type HNK-1 (SO4-3-GlcUABeta1,3GalBeta1,4GlcNAc). O-glycosylated. As to expression, expressed in the fetal and adult brain as well as in Schwann cell culture. Also detected in adult peripheral tissues.

The protein resides in the cell membrane. It is found in the secreted. The protein localises to the extracellular space. It localises to the extracellular matrix. Functionally, extracellular matrix and cell adhesion protein that plays a role in nervous system development and in synaptic plasticity. Both soluble and membranous forms promote neurite outgrowth of cerebellar and hippocampal neurons and suppress neuronal cell death. Plays a role in neuronal positioning of pyramidal neurons and in regulation of both the number of interneurons and the efficacy of GABAergic synapses. May play a role in regulating cell migration in nerve regeneration and cortical development. Potentiates integrin-dependent cell migration towards extracellular matrix proteins. Recruits ANK3 to the plasma membrane. The polypeptide is Neural cell adhesion molecule L1-like protein (CHL1) (Homo sapiens (Human)).